A 367-amino-acid chain; its full sequence is Glycerol dehydrogenase (367 aa).

5 residues coordinate NAD(+): Asp37, Gly94, Lys95, Thr116, and Ser119. A glycerol-binding site is contributed by Asp121. Residues Ser125, Leu127, and Tyr131 each contribute to the NAD(+) site. The Zn(2+) site is built by Asp171, His254, and His271. Residue His254 participates in glycerol binding.

Belongs to the iron-containing alcohol dehydrogenase family. The cofactor is Zn(2+).

The enzyme catalyses glycerol + NAD(+) = dihydroxyacetone + NADH + H(+). It participates in polyol metabolism; glycerol fermentation; glycerone phosphate from glycerol (oxidative route): step 1/2. Its function is as follows. Catalyzes the NAD-dependent oxidation of glycerol to dihydroxyacetone (glycerone). Allows microorganisms to utilize glycerol as a source of carbon under anaerobic conditions. The chain is Glycerol dehydrogenase (gldA) from Escherichia coli O6:H1 (strain CFT073 / ATCC 700928 / UPEC).